Here is a 318-residue protein sequence, read N- to C-terminus: cAMP/cGMP dual specificity phosphodiesterase MT0825 (318 aa).

Fe cation is bound by residues Asp21, His23, and Asp63. AMP-binding positions include His23, Asp63, and 97–98 (NH). Residues Asp63, Asn97, His169, and His207 each contribute to the Mn(2+) site. Position 209 (His209) interacts with Fe cation. Residue His209 coordinates AMP. Residues 278–318 (PGQARRKIAESGIFIEPSRRDSLFKHPPMVLTSSAPRSPVD) are C-terminal extension.

It belongs to the cyclic nucleotide phosphodiesterase class-III family. In terms of assembly, homodimer. Fe(3+) serves as cofactor. Requires Mn(2+) as cofactor.

The protein resides in the cytoplasm. Its subcellular location is the cell membrane. It is found in the secreted. The protein localises to the cell wall. It localises to the cell envelope. The catalysed reaction is a nucleoside 2',3'-cyclic phosphate + H2O = a nucleoside 3'-phosphate + H(+). It catalyses the reaction 2',3'-cyclophospho-AMP + H2O = 3'-AMP + H(+). It carries out the reaction 2',3'-cyclophospho-GMP + H2O = 3'-GMP + H(+). The enzyme catalyses a nucleoside 3',5'-cyclic phosphate + H2O = a nucleoside 5'-phosphate + H(+). The catalysed reaction is 3',5'-cyclic AMP + H2O = AMP + H(+). It catalyses the reaction 3',5'-cyclic GMP + H2O = GMP + H(+). Cyclic nucleotide phosphodiesterase with a dual-specificity for the second messengers cAMP and cGMP. The sequence is that of cAMP/cGMP dual specificity phosphodiesterase MT0825 from Mycobacterium tuberculosis (strain CDC 1551 / Oshkosh).